Consider the following 456-residue polypeptide: Trigger factor (456 aa).

The PPIase FKBP-type domain occupies 166 to 245 (GDYANIDLNA…VNSVKAEELP (80 aa)).

This sequence belongs to the FKBP-type PPIase family. Tig subfamily.

Its subcellular location is the cytoplasm. It carries out the reaction [protein]-peptidylproline (omega=180) = [protein]-peptidylproline (omega=0). In terms of biological role, involved in protein export. Acts as a chaperone by maintaining the newly synthesized protein in an open conformation. Functions as a peptidyl-prolyl cis-trans isomerase. This Bifidobacterium adolescentis (strain ATCC 15703 / DSM 20083 / NCTC 11814 / E194a) protein is Trigger factor.